The chain runs to 511 residues: NAD(P)H-quinone oxidoreductase subunit 2 B, chloroplastic (511 aa).

Helical transmembrane passes span 24-44, 57-77, 99-119, 124-144, 149-169, 183-203, 227-247, 295-315, 323-343, 354-374, 395-415, 418-438, and 484-504; these read LLLF…GLIL, IPWL…ALLF, IFQF…VEYI, MAIT…MFLC, LITI…LSGY, YLLM…WLYG, PGIS…LSPA, WHLL…LIAI, MLAY…IVGD, YMLF…LFGL, ALSL…AGFF, LHLF…IGLL, and MIVC…IIAI.

It belongs to the complex I subunit 2 family. As to quaternary structure, NDH is composed of at least 16 different subunits, 5 of which are encoded in the nucleus.

The protein resides in the plastid. It localises to the chloroplast thylakoid membrane. The enzyme catalyses a plastoquinone + NADH + (n+1) H(+)(in) = a plastoquinol + NAD(+) + n H(+)(out). It catalyses the reaction a plastoquinone + NADPH + (n+1) H(+)(in) = a plastoquinol + NADP(+) + n H(+)(out). In terms of biological role, NDH shuttles electrons from NAD(P)H:plastoquinone, via FMN and iron-sulfur (Fe-S) centers, to quinones in the photosynthetic chain and possibly in a chloroplast respiratory chain. The immediate electron acceptor for the enzyme in this species is believed to be plastoquinone. Couples the redox reaction to proton translocation, and thus conserves the redox energy in a proton gradient. The protein is NAD(P)H-quinone oxidoreductase subunit 2 B, chloroplastic of Nandina domestica (Heavenly bamboo).